Reading from the N-terminus, the 631-residue chain is Probable basic-leucine zipper transcription factor F (631 aa).

Positions 35-62 (KKNANVFNNFQQQQQQIQQQNKQSNGLI) form a coiled coil. 3 disordered regions span residues 46-117 (QQQQ…HNNI), 154-207 (LNNS…NNQF), and 264-406 (MLNV…ERHQ). Low complexity-rich tracts occupy residues 155–206 (NNSY…NNNQ) and 271–360 (NNAN…GSNN). A coiled-coil region spans residues 328–366 (NNNNNNSNNISTQINNLNNNINNQNNQLNGSNNGKKKEE). The bZIP domain occupies 405–468 (HQKRQRRLVK…KLIREQLLYL (64 aa)). The interval 407–427 (KRQRRLVKNREAAQLFRQRQK) is basic motif. Positions 433-440 (LEKKVSDL) are leucine-zipper. The disordered stretch occupies residues 546 to 631 (QGNLLGTPIP…PPQQSTPNQR (86 aa)). Composition is skewed to low complexity over residues 563–609 (SNSG…PNSS) and 618–631 (PQNT…PNQR).

Belongs to the bZIP family.

It is found in the nucleus. Its function is as follows. Probable transcriptional regulator. This chain is Probable basic-leucine zipper transcription factor F (bzpF), found in Dictyostelium discoideum (Social amoeba).